The sequence spans 142 residues: Putative pre-16S rRNA nuclease (142 aa).

This sequence belongs to the YqgF nuclease family.

The protein resides in the cytoplasm. In terms of biological role, could be a nuclease involved in processing of the 5'-end of pre-16S rRNA. This Shouchella clausii (strain KSM-K16) (Alkalihalobacillus clausii) protein is Putative pre-16S rRNA nuclease.